Here is a 516-residue protein sequence, read N- to C-terminus: 2,3-bisphosphoglycerate-independent phosphoglycerate mutase (516 aa).

Mn(2+) is bound by residues Asp14 and Ser64. Ser64 acts as the Phosphoserine intermediate in catalysis. Substrate is bound by residues His125, 155 to 156 (RD), Arg187, Arg193, 263 to 266 (RPDR), and Lys337. 5 residues coordinate Mn(2+): Asp404, His408, Asp445, His446, and His464.

Belongs to the BPG-independent phosphoglycerate mutase family. As to quaternary structure, monomer. The cofactor is Mn(2+).

It catalyses the reaction (2R)-2-phosphoglycerate = (2R)-3-phosphoglycerate. Its pathway is carbohydrate degradation; glycolysis; pyruvate from D-glyceraldehyde 3-phosphate: step 3/5. Catalyzes the interconversion of 2-phosphoglycerate and 3-phosphoglycerate. The chain is 2,3-bisphosphoglycerate-independent phosphoglycerate mutase from Saccharophagus degradans (strain 2-40 / ATCC 43961 / DSM 17024).